We begin with the raw amino-acid sequence, 341 residues long: Phenylalanine--tRNA ligase alpha subunit (341 aa).

Mg(2+) is bound at residue Glu-256.

The protein belongs to the class-II aminoacyl-tRNA synthetase family. Phe-tRNA synthetase alpha subunit type 1 subfamily. As to quaternary structure, tetramer of two alpha and two beta subunits. The cofactor is Mg(2+).

The protein localises to the cytoplasm. The catalysed reaction is tRNA(Phe) + L-phenylalanine + ATP = L-phenylalanyl-tRNA(Phe) + AMP + diphosphate + H(+). The polypeptide is Phenylalanine--tRNA ligase alpha subunit (Leptospira borgpetersenii serovar Hardjo-bovis (strain JB197)).